A 442-amino-acid polypeptide reads, in one-letter code: D-galactonate dehydratase family member SSBG_02010 (442 aa).

D246 is a binding site for Mg(2+). H248 contacts D-arabinonate. 2 residues coordinate Mg(2+): E272 and E298. E298, R319, H348, and E375 together coordinate D-arabinonate.

It belongs to the mandelate racemase/muconate lactonizing enzyme family. GalD subfamily.

Has no detectable activity with D-mannonate and with a panel of 70 other acid sugars (in vitro), in spite of the conservation of the residues that are expected to be important for catalytic activity and cofactor binding. May have evolved a divergent function. The chain is D-galactonate dehydratase family member SSBG_02010 from Streptomyces sp. (strain SPB074).